Here is a 501-residue protein sequence, read N- to C-terminus: Glycerol kinase (501 aa).

Thr-11 provides a ligand contact to ADP. Residues Thr-11, Thr-12, and Ser-13 each coordinate ATP. Thr-11 contacts sn-glycerol 3-phosphate. Position 15 (Arg-15) interacts with ADP. Arg-81, Glu-82, Tyr-133, and Asp-242 together coordinate sn-glycerol 3-phosphate. Glycerol contacts are provided by Arg-81, Glu-82, Tyr-133, Asp-242, and Gln-243. ADP is bound by residues Thr-264 and Gly-307. Positions 264, 307, 311, and 409 each coordinate ATP. 2 residues coordinate ADP: Gly-409 and Asn-413.

Belongs to the FGGY kinase family.

It carries out the reaction glycerol + ATP = sn-glycerol 3-phosphate + ADP + H(+). It participates in polyol metabolism; glycerol degradation via glycerol kinase pathway; sn-glycerol 3-phosphate from glycerol: step 1/1. Inhibited by fructose 1,6-bisphosphate (FBP). Functionally, key enzyme in the regulation of glycerol uptake and metabolism. Catalyzes the phosphorylation of glycerol to yield sn-glycerol 3-phosphate. In Borreliella burgdorferi (strain ATCC 35210 / DSM 4680 / CIP 102532 / B31) (Borrelia burgdorferi), this protein is Glycerol kinase.